We begin with the raw amino-acid sequence, 375 residues long: MAKLRVGIIFGGQSAEHEVSLQSAKNIVETIDENKFEVVLFGIDKEGQWHINNKLNYLIYGENETYIALNKSNKHIAIIPGRKHDQFIQIDMLEQLVQLDVIFPIVHGTLGEDGNLQGLLRMANLPFVGSTVLGSAVSMDKDIAKRLLRDADLEVTPSITLTRINRENFSYDQIITYLGSSLFVKPANQGSSVGVSKVINRISFDQALALAFCFDDKVLVESAINGRELECAVLGNHDPQASLCGEIVLSDNFYSYEKKYLNEHGAVVVVPAAISKEVSNNIQKIAVRAFQALNCTGMARVDVFLTTNNKVLVNEVNTSPGFTSISMYPKLWQASGISYPALITRLIELAIERYYAEQKKISHRDIYNKIDTGSA.

The ATP-grasp domain maps to 145-348 (KRLLRDADLE…YPALITRLIE (204 aa)). An ATP-binding site is contributed by 175–230 (ITYLGSSLFVKPANQGSSVGVSKVINRISFDQALALAFCFDDKVLVESAINGRELE). Mg(2+) contacts are provided by aspartate 302, glutamate 315, and asparagine 317.

This sequence belongs to the D-alanine--D-alanine ligase family. The cofactor is Mg(2+). Mn(2+) is required as a cofactor.

It is found in the cytoplasm. It carries out the reaction 2 D-alanine + ATP = D-alanyl-D-alanine + ADP + phosphate + H(+). It functions in the pathway cell wall biogenesis; peptidoglycan biosynthesis. Its function is as follows. Cell wall formation. This Baumannia cicadellinicola subsp. Homalodisca coagulata protein is D-alanine--D-alanine ligase.